A 394-amino-acid polypeptide reads, in one-letter code: 1-deoxy-D-xylulose 5-phosphate reductoisomerase (394 aa).

Residues Thr28, Gly29, Ser30, Ile31, Asn57, and Asn133 each contribute to the NADPH site. Lys134 provides a ligand contact to 1-deoxy-D-xylulose 5-phosphate. Glu135 contacts NADPH. Asp157 is a Mn(2+) binding site. Positions 158, 159, 183, and 206 each coordinate 1-deoxy-D-xylulose 5-phosphate. Glu159 contributes to the Mn(2+) binding site. An NADPH-binding site is contributed by Gly212. 4 residues coordinate 1-deoxy-D-xylulose 5-phosphate: Ser219, Asn224, Lys225, and Glu228. Glu228 provides a ligand contact to Mn(2+).

Belongs to the DXR family. Mg(2+) serves as cofactor. Requires Mn(2+) as cofactor.

The catalysed reaction is 2-C-methyl-D-erythritol 4-phosphate + NADP(+) = 1-deoxy-D-xylulose 5-phosphate + NADPH + H(+). It functions in the pathway isoprenoid biosynthesis; isopentenyl diphosphate biosynthesis via DXP pathway; isopentenyl diphosphate from 1-deoxy-D-xylulose 5-phosphate: step 1/6. Its function is as follows. Catalyzes the NADPH-dependent rearrangement and reduction of 1-deoxy-D-xylulose-5-phosphate (DXP) to 2-C-methyl-D-erythritol 4-phosphate (MEP). In Nocardia farcinica (strain IFM 10152), this protein is 1-deoxy-D-xylulose 5-phosphate reductoisomerase.